The following is a 329-amino-acid chain: Sex comb on midleg-like protein 1 (329 aa).

Residues serine 138 and serine 238 each carry the phosphoserine modification. The region spanning 258–325 is the SAM domain; sequence WSVEAVVLFL…YYIDRLKQGK (68 aa).

Belongs to the SCM family.

The protein localises to the nucleus. Its function is as follows. Putative Polycomb group (PcG) protein. PcG proteins act by forming multiprotein complexes, which are required to maintain the transcriptionally repressive state of homeotic genes throughout development. May be involved in spermatogenesis during sexual maturation. The protein is Sex comb on midleg-like protein 1 (SCML1) of Nomascus leucogenys (Northern white-cheeked gibbon).